Consider the following 187-residue polypeptide: Elongation factor P (187 aa).

This sequence belongs to the elongation factor P family.

It localises to the cytoplasm. It participates in protein biosynthesis; polypeptide chain elongation. Functionally, involved in peptide bond synthesis. Stimulates efficient translation and peptide-bond synthesis on native or reconstituted 70S ribosomes in vitro. Probably functions indirectly by altering the affinity of the ribosome for aminoacyl-tRNA, thus increasing their reactivity as acceptors for peptidyl transferase. In Magnetococcus marinus (strain ATCC BAA-1437 / JCM 17883 / MC-1), this protein is Elongation factor P.